The chain runs to 216 residues: Protein-L-isoaspartate O-methyltransferase (216 aa).

Residue Ser-66 is part of the active site.

The protein belongs to the methyltransferase superfamily. L-isoaspartyl/D-aspartyl protein methyltransferase family.

The protein localises to the cytoplasm. It catalyses the reaction [protein]-L-isoaspartate + S-adenosyl-L-methionine = [protein]-L-isoaspartate alpha-methyl ester + S-adenosyl-L-homocysteine. In terms of biological role, catalyzes the methyl esterification of L-isoaspartyl residues in peptides and proteins that result from spontaneous decomposition of normal L-aspartyl and L-asparaginyl residues. It plays a role in the repair and/or degradation of damaged proteins. This Dechloromonas aromatica (strain RCB) protein is Protein-L-isoaspartate O-methyltransferase.